The primary structure comprises 388 residues: Succinate--CoA ligase [ADP-forming] subunit beta (388 aa).

The ATP-grasp domain maps to 9 to 244 (KQLFAEYGLP…PSQDDAREAH (236 aa)). Residues lysine 46, 53–55 (GRG), glutamate 99, threonine 102, and glutamate 107 each bind ATP. The Mg(2+) site is built by asparagine 199 and aspartate 213. Substrate contacts are provided by residues asparagine 264 and 321–323 (GIV).

This sequence belongs to the succinate/malate CoA ligase beta subunit family. Heterotetramer of two alpha and two beta subunits. It depends on Mg(2+) as a cofactor.

The catalysed reaction is succinate + ATP + CoA = succinyl-CoA + ADP + phosphate. It carries out the reaction GTP + succinate + CoA = succinyl-CoA + GDP + phosphate. The protein operates within carbohydrate metabolism; tricarboxylic acid cycle; succinate from succinyl-CoA (ligase route): step 1/1. Functionally, succinyl-CoA synthetase functions in the citric acid cycle (TCA), coupling the hydrolysis of succinyl-CoA to the synthesis of either ATP or GTP and thus represents the only step of substrate-level phosphorylation in the TCA. The beta subunit provides nucleotide specificity of the enzyme and binds the substrate succinate, while the binding sites for coenzyme A and phosphate are found in the alpha subunit. The polypeptide is Succinate--CoA ligase [ADP-forming] subunit beta (Pseudomonas putida (strain ATCC 700007 / DSM 6899 / JCM 31910 / BCRC 17059 / LMG 24140 / F1)).